Reading from the N-terminus, the 117-residue chain is Large ribosomal subunit protein uL18 (117 aa).

This sequence belongs to the universal ribosomal protein uL18 family. As to quaternary structure, part of the 50S ribosomal subunit; part of the 5S rRNA/L5/L18/L25 subcomplex. Contacts the 5S and 23S rRNAs.

Functionally, this is one of the proteins that bind and probably mediate the attachment of the 5S RNA into the large ribosomal subunit, where it forms part of the central protuberance. The chain is Large ribosomal subunit protein uL18 from Sodalis glossinidius (strain morsitans).